A 376-amino-acid chain; its full sequence is Chaperone protein DnaJ (376 aa).

The J domain occupies 5 to 70; sequence DYYEVLGVAR…NKRRAYDAHG (66 aa). The CR-type zinc finger occupies 132–209; it reads GIERRIEIPT…CHGAGRVEEN (78 aa). The Zn(2+) site is built by cysteine 145, cysteine 148, cysteine 161, cysteine 164, cysteine 183, cysteine 186, cysteine 197, and cysteine 200. 4 CXXCXGXG motif repeats span residues 145–152, 161–168, 183–190, and 197–204; these read CVSCHGSG, CGTCHGRG, CPHCDGRG, and CKTCHGAG.

This sequence belongs to the DnaJ family. As to quaternary structure, homodimer. It depends on Zn(2+) as a cofactor.

Its subcellular location is the cytoplasm. Functionally, participates actively in the response to hyperosmotic and heat shock by preventing the aggregation of stress-denatured proteins and by disaggregating proteins, also in an autonomous, DnaK-independent fashion. Unfolded proteins bind initially to DnaJ; upon interaction with the DnaJ-bound protein, DnaK hydrolyzes its bound ATP, resulting in the formation of a stable complex. GrpE releases ADP from DnaK; ATP binding to DnaK triggers the release of the substrate protein, thus completing the reaction cycle. Several rounds of ATP-dependent interactions between DnaJ, DnaK and GrpE are required for fully efficient folding. Also involved, together with DnaK and GrpE, in the DNA replication of plasmids through activation of initiation proteins. The chain is Chaperone protein DnaJ from Xanthomonas oryzae pv. oryzae (strain PXO99A).